The sequence spans 394 residues: D-aspartate oxidase (394 aa).

I19, A57, S58, and G62 together coordinate FAD. Residues 190–210 (LIGHEPTAGVIVCVGLGALVL) traverse the membrane as a helical segment. N-linked (GlcNAc...) asparagine glycosylation is present at N214. 3 residues coordinate FAD: R342, G373, and Q375.

The protein belongs to the DAMOX/DASOX family. FAD is required as a cofactor.

The protein localises to the membrane. It carries out the reaction D-aspartate + O2 + H2O = oxaloacetate + H2O2 + NH4(+). Functionally, selectively catalyzes the oxidative deamination of acidic amino acids. Protects the organism from the toxicity of D-amino acids. Enables the organism to utilize D-amino acids as a source of nutrients. Enables the organism to utilize D-aspartate and D-asparagine as a source of nitrogen. May play a role in its interaction with the host. This is D-aspartate oxidase from Cryptococcus neoformans var. grubii serotype A (strain H99 / ATCC 208821 / CBS 10515 / FGSC 9487) (Filobasidiella neoformans var. grubii).